Consider the following 442-residue polypeptide: Microfibrillar-associated protein 1 (442 aa).

2 disordered regions span residues 1–34 and 113–203; these read MSAPSALVKQPPIQSTAGACPSRNEKGRAVYGEG and EVVS…PRLK. Acidic residues-rich tracts occupy residues 134–148 and 181–198; these read DTSEEEEEEIDDEEI and ESELESEYEEYTDSEDEM.

Belongs to the MFAP1 family. In terms of assembly, component of the spliceosome B complex. Interacts with PRPF38A (via N-terminal interaction domain). Widely expressed.

It is found in the nucleus. Involved in pre-mRNA splicing as a component of the spliceosome. The chain is Microfibrillar-associated protein 1 from Gallus gallus (Chicken).